We begin with the raw amino-acid sequence, 568 residues long: SLAIN motif-containing protein 1 (568 aa).

5 disordered regions span residues methionine 1 to valine 22, leucine 59 to alanine 92, glycine 139 to proline 162, tyrosine 235 to glutamate 256, and serine 291 to serine 403. Residues proline 21–alanine 56 are a coiled coil. Residues leucine 62–glycine 74 show a composition bias toward pro residues. A compositionally biased stretch (low complexity) spans leucine 75–alanine 92. A compositionally biased stretch (gly residues) spans glycine 139–threonine 149. Positions tyrosine 235–glutamine 245 are enriched in polar residues. The residue at position 243 (serine 243) is a Phosphoserine. 2 stretches are compositionally biased toward low complexity: residues serine 246–serine 255 and serine 291–serine 307. The segment covering glutamine 316–phenylalanine 329 has biased composition (acidic residues). Low complexity predominate over residues serine 366–glutamine 384. A compositionally biased stretch (polar residues) spans alanine 385 to threonine 395. An asymmetric dimethylarginine mark is found at arginine 471 and arginine 543.

The protein belongs to the SLAIN motif-containing family. Interacts with MAPRE1, MAPRE2, MAPRE3 and CKAP5. Interacts with ZDHHC17 (via ANK repeats). Expressed in embryonic stem cells. Expressed in brain.

The protein resides in the cytoplasm. It localises to the cytoskeleton. Functionally, microtubule plus-end tracking protein that might be involved in the regulation of cytoplasmic microtubule dynamics, microtubule organization and microtubule elongation. This chain is SLAIN motif-containing protein 1 (SLAIN1), found in Homo sapiens (Human).